Consider the following 3206-residue polypeptide: Highly reducing polyketide synthase ltbA (3206 aa).

The Ketosynthase family 3 (KS3) domain occupies 5-434 (PAPIAIIGVG…GTNCHVILEA (430 aa)). Active-site for beta-ketoacyl synthase activity residues include cysteine 179, histidine 314, and histidine 354. A compositionally biased stretch (polar residues) spans 441–463 (PTGTNGIKTNGTRINGIKTNGAD). The interval 441–472 (PTGTNGIKTNGTRINGIKTNGADTNERESMKN) is disordered. Residues 575 to 890 (VFSGQGAQWH…EYLSALQRNT (316 aa)) are malonyl-CoA:ACP transacylase (MAT) domain. The tract at residues 958-1098 (HDLLGLFDPA…GEITVEYETD (141 aa)) is N-terminal hotdog fold. The tract at residues 958–1278 (HDLLGLFDPA…LLVNLRAIGE (321 aa)) is dehydratase (DH) domain. Residues 958–1284 (HDLLGLFDPA…AIGETREDED (327 aa)) enclose the PKS/mFAS DH domain. The active-site Proton acceptor; for dehydratase activity is histidine 990. The C-terminal hotdog fold stretch occupies residues 1128-1284 (DTDMTKSEFY…AIGETREDED (157 aa)). Catalysis depends on aspartate 1193, which acts as the Proton donor; for dehydratase activity. Residues 1450 to 1640 (ESGILVGPYE…LARNGFGGIH (191 aa)) are methyltransferase (CMet) domain. Positions 1871–2185 (LLSSLRFVDD…RKHTGKVVLQ (315 aa)) are enoyl reductase (ER) domain. Residues 2208 to 2395 (GTYVAAGGLG…SVDAHGALKE (188 aa)) are ketoreductase (KR) domain. Residues 2499 to 2577 (EEAEQLIRDA…ALAATVASRS (79 aa)) form the Carrier domain. At serine 2537 the chain carries O-(pantetheine 4'-phosphoryl)serine. The disordered stretch occupies residues 2584 to 2611 (IRHSSRLQEATTQAENKDAPKNEKEGPS). A compositionally biased stretch (basic and acidic residues) spans 2598–2610 (ENKDAPKNEKEGP). Residues 2994-3206 (HLIPSFGKAV…IKTIIQAGQE (213 aa)) form a carnitine O-acyltransferase (cAT) domain region.

It depends on pantetheine 4'-phosphate as a cofactor.

Its pathway is secondary metabolite biosynthesis. Highly reducing polyketide synthase; part of the gene cluster that mediates the biosynthesis of luteodienoside A, a glycosylated polyketide consisting of an unusual 1-O-beta-D-glucopyranosyl-myo-inositol (glucinol) ester of 3-hydroxy-2,2,4-trimethylocta-4,6-dienoic acid. LtbA produces the trimethylated polyketide chain from acetyl-CoA, malonyl-CoA and S-adenosylmethionine (SAM). The ltbA carnitine O-acyltransferase (cAT) domain then uses glucinol produced by the glycosyltransferase ltbB as an offloading substrate to release luteodienoside A. Furthermore, the PKS C-methyltransferase (CMeT) domain is capable of catalysing gem-dimethylation of the 3-hydroxy-2,2,4-trimethylocta-4,6-dienoic acid intermediate, without requiring reversible product release and recapture by the cAT domain. Since ltbA and ltbB are sufficient for the biosynthesis of luteodienoside A, the functions of the methyltransferase ltbC and the FAD-binding monooxygenase ltbD within the pathway remain obscur. This Aspergillus luteorubrus protein is Highly reducing polyketide synthase ltbA.